The chain runs to 349 residues: 6-phosphogluconolactonase (349 aa).

The interval L125–A151 is disordered. A compositionally biased stretch (basic and acidic residues) spans G138–H147.

Belongs to the cycloisomerase 2 family.

It carries out the reaction 6-phospho-D-glucono-1,5-lactone + H2O = 6-phospho-D-gluconate + H(+). It functions in the pathway carbohydrate degradation; pentose phosphate pathway; D-ribulose 5-phosphate from D-glucose 6-phosphate (oxidative stage): step 2/3. Functionally, catalyzes the hydrolysis of 6-phosphogluconolactone to 6-phosphogluconate. In Bacillus subtilis (strain 168), this protein is 6-phosphogluconolactonase (pgl).